A 367-amino-acid polypeptide reads, in one-letter code: Isoflavone 4'-O-methyltransferase (367 aa).

S-adenosyl-L-methionine contacts are provided by residues 209–212, D233, 233–234, 253–254, and K267; these read VGGG, DQ, and DM. H271 serves as the catalytic Proton acceptor.

It belongs to the class I-like SAM-binding methyltransferase superfamily. Cation-independent O-methyltransferase family. COMT subfamily.

It carries out the reaction a 4'-hydroxyisoflavone + S-adenosyl-L-methionine = a 4'-methoxyisoflavone + S-adenosyl-L-homocysteine + H(+). The catalysed reaction is (2R,3S)-2,4',7-trihydroxyisoflavanone + S-adenosyl-L-methionine = (2R,3S)-2,7-dihydroxy-4'-methoxyisoflavanone + S-adenosyl-L-homocysteine + H(+). 2-hydroxyisoflavanone 4'-O-methyltransferase involved in the biosynthesis of formononetin. Can use 2,7,4'-trihydroxyisoflavanone, (+)-6a-hydroxymaackiain or medicarpin as substrate, but not daidzein or (-)-6a-hydroxymaackiain. This is Isoflavone 4'-O-methyltransferase (HI4'OMT) from Glycyrrhiza echinata (Licorice).